The chain runs to 142 residues: Large ribosomal subunit protein uL13 (142 aa).

The protein belongs to the universal ribosomal protein uL13 family. Part of the 50S ribosomal subunit.

In terms of biological role, this protein is one of the early assembly proteins of the 50S ribosomal subunit, although it is not seen to bind rRNA by itself. It is important during the early stages of 50S assembly. In Desulfotalea psychrophila (strain LSv54 / DSM 12343), this protein is Large ribosomal subunit protein uL13.